Reading from the N-terminus, the 115-residue chain is Large ribosomal subunit protein bL20c (115 aa).

Belongs to the bacterial ribosomal protein bL20 family.

It is found in the plastid. The protein resides in the chloroplast. Functionally, binds directly to 23S ribosomal RNA and is necessary for the in vitro assembly process of the 50S ribosomal subunit. It is not involved in the protein synthesizing functions of that subunit. In Gnetum parvifolium (Small-leaved jointfir), this protein is Large ribosomal subunit protein bL20c.